The sequence spans 367 residues: Phosphoribosylaminoimidazole-succinocarboxamide synthase (367 aa).

This sequence belongs to the SAICAR synthetase family.

It catalyses the reaction 5-amino-1-(5-phospho-D-ribosyl)imidazole-4-carboxylate + L-aspartate + ATP = (2S)-2-[5-amino-1-(5-phospho-beta-D-ribosyl)imidazole-4-carboxamido]succinate + ADP + phosphate + 2 H(+). The protein operates within purine metabolism; IMP biosynthesis via de novo pathway; 5-amino-1-(5-phospho-D-ribosyl)imidazole-4-carboxamide from 5-amino-1-(5-phospho-D-ribosyl)imidazole-4-carboxylate: step 1/2. The chain is Phosphoribosylaminoimidazole-succinocarboxamide synthase from Shewanella amazonensis (strain ATCC BAA-1098 / SB2B).